Consider the following 453-residue polypeptide: UPF0210 protein MM_0081 (453 aa).

The protein belongs to the UPF0210 family.

This is UPF0210 protein MM_0081 from Methanosarcina mazei (strain ATCC BAA-159 / DSM 3647 / Goe1 / Go1 / JCM 11833 / OCM 88) (Methanosarcina frisia).